We begin with the raw amino-acid sequence, 126 residues long: Small ribosomal subunit protein eS6 (126 aa).

The protein belongs to the eukaryotic ribosomal protein eS6 family.

The sequence is that of Small ribosomal subunit protein eS6 from Thermococcus sibiricus (strain DSM 12597 / MM 739).